The following is a 475-amino-acid chain: Ataxin-10 (475 aa).

Arg10 is subject to Omega-N-methylarginine. Phosphoserine occurs at positions 12 and 77. Position 82 is a phosphothreonine (Thr82). Ser430 carries the post-translational modification Phosphoserine.

Belongs to the ataxin-10 family. Homooligomer. Interacts with GNB2. Interacts with IQCB1. Interacts with OGT. In terms of processing, polyubiquitinated. Post-translationally, phosphorylation at Ser-12 by AURKB promotes the association of ATXN10 with PLK1. Phosphorylation at Ser-77 and Thr-82 by PLK1 may play a role in the regulation of cytokinesis and may stimulate the proteasome-mediated degradation of ATXN10.

The protein localises to the cytoplasm. It localises to the perinuclear region. The protein resides in the cytoskeleton. Its subcellular location is the cilium basal body. It is found in the microtubule organizing center. The protein localises to the centrosome. It localises to the centriole. The protein resides in the midbody. In terms of biological role, may play a role in the regulation of cytokinesis. May play a role in signaling by stimulating protein glycosylation. Induces neuritogenesis by activating the Ras-MAP kinase pathway and is necessary for the survival of cerebellar neurons. Does not appear to play a major role in ciliogenesis. In Bos taurus (Bovine), this protein is Ataxin-10 (ATXN10).